The chain runs to 158 residues: SsrA-binding protein (158 aa).

Positions 133 to 152 (KRQTLREQQDNREAQREMRE) are enriched in basic and acidic residues. The disordered stretch occupies residues 133 to 158 (KRQTLREQQDNREAQREMRERNRRRG).

This sequence belongs to the SmpB family.

The protein resides in the cytoplasm. In terms of biological role, required for rescue of stalled ribosomes mediated by trans-translation. Binds to transfer-messenger RNA (tmRNA), required for stable association of tmRNA with ribosomes. tmRNA and SmpB together mimic tRNA shape, replacing the anticodon stem-loop with SmpB. tmRNA is encoded by the ssrA gene; the 2 termini fold to resemble tRNA(Ala) and it encodes a 'tag peptide', a short internal open reading frame. During trans-translation Ala-aminoacylated tmRNA acts like a tRNA, entering the A-site of stalled ribosomes, displacing the stalled mRNA. The ribosome then switches to translate the ORF on the tmRNA; the nascent peptide is terminated with the 'tag peptide' encoded by the tmRNA and targeted for degradation. The ribosome is freed to recommence translation, which seems to be the essential function of trans-translation. In Pseudarthrobacter chlorophenolicus (strain ATCC 700700 / DSM 12829 / CIP 107037 / JCM 12360 / KCTC 9906 / NCIMB 13794 / A6) (Arthrobacter chlorophenolicus), this protein is SsrA-binding protein.